Reading from the N-terminus, the 198-residue chain is dITP/XTP pyrophosphatase (198 aa).

A substrate-binding site is contributed by 9-14; that stretch reads SNNAKK. Positions 41 and 70 each coordinate Mg(2+). The active-site Proton acceptor is Asp70. Residues Ser71, 153-156, Lys176, and 181-182 contribute to the substrate site; these read FGYD and HR.

This sequence belongs to the HAM1 NTPase family. Homodimer. The cofactor is Mg(2+).

It catalyses the reaction XTP + H2O = XMP + diphosphate + H(+). The catalysed reaction is dITP + H2O = dIMP + diphosphate + H(+). It carries out the reaction ITP + H2O = IMP + diphosphate + H(+). Functionally, pyrophosphatase that catalyzes the hydrolysis of nucleoside triphosphates to their monophosphate derivatives, with a high preference for the non-canonical purine nucleotides XTP (xanthosine triphosphate), dITP (deoxyinosine triphosphate) and ITP. Seems to function as a house-cleaning enzyme that removes non-canonical purine nucleotides from the nucleotide pool, thus preventing their incorporation into DNA/RNA and avoiding chromosomal lesions. This Aromatoleum aromaticum (strain DSM 19018 / LMG 30748 / EbN1) (Azoarcus sp. (strain EbN1)) protein is dITP/XTP pyrophosphatase.